The primary structure comprises 394 residues: 4-O-methyl-glucuronoyl methylesterase (394 aa).

Residues 1 to 18 (MVHLTPALLLASAAFAAA) form the signal peptide. 3 cysteine pairs are disulfide-bonded: cysteine 29-cysteine 63, cysteine 210-cysteine 345, and cysteine 242-cysteine 317. The GXSYXG catalytic site motif signature appears at 209 to 214 (GCSRNG). Serine 211 acts as the Nucleophile in catalysis. 4 residues coordinate substrate: lysine 215, glutamine 257, glutamate 265, and tryptophan 308. Catalysis depends on histidine 344, which acts as the Proton donor/acceptor.

This sequence belongs to the carbohydrate esterase 15 (CE15) family.

Its subcellular location is the secreted. The enzyme catalyses a 4-O-methyl-alpha-D-glucuronosyl ester derivative + H2O = 4-O-methyl-alpha-D-glucuronate derivative + an alcohol + H(+). In terms of biological role, glucuronoyl esterase which may play a significant role in biomass degradation, as it is considered to disconnect hemicellulose from lignin through the hydrolysis of the ester bond between 4-O-methyl-D-glucuronic acid residues of glucuronoxylans and aromatic alcohols of lignin. The sequence is that of 4-O-methyl-glucuronoyl methylesterase from Neurospora crassa (strain ATCC 24698 / 74-OR23-1A / CBS 708.71 / DSM 1257 / FGSC 987).